A 508-amino-acid chain; its full sequence is MGLPWYRVHTVVLNDPGRLIAVHLMHTSLVSGWAGSMAFYELAVFDPSDPVLNPMWRQGMFVLPFMTRLGITQSWGGWTISGETAANPGVWSYEGVAAAHIVLSGLLFAASIWHWVYWDLELFRDPRTSNPALDLPKIFGIHLFLSGVLCFGFGAFHVTGIFGPGIWVSDPYGITGTVQAVAPSWDATGFDPYNPGGISAHHIAAGILGVLAGLFHLCVRPPQRLYNGLRMGNIETVLSSSIAAVFWAAFVVSGTMWYGSAATPIELFGPTRYQWDLGFFQQEIERRVQTNLSEGKSASQAWAEIPEKLAFYDYIGNNPAKGGLFRAGAMNSGDGIAVGWLGHAVFKEKQGNELFVRRMPTFFETFPVVLVDKDGVVRADVPFRRSESKYSIEQVGVSVTFYGGELDGVTFNDPATVKKYARRAQLGEIFEFDRATLQSDGVFRASPRGWFTFAHLCFALLFFFGHIWHGARTIFRDVFAGIDADLDEQVEFGAFLKLGDTSTRRQSV.

The next 6 helical transmembrane spans lie at 21–36 (AVHL…WAGS), 101–115 (IVLS…IWHW), 140–156 (GIHL…FGAF), 203–218 (IAAG…FHLC), 237–252 (VLSS…AFVV), and 457–472 (CFAL…HGAR).

It belongs to the PsbB/PsbC family. PsbB subfamily. PSII is composed of 1 copy each of membrane proteins PsbA, PsbB, PsbC, PsbD, PsbE, PsbF, PsbH, PsbI, PsbJ, PsbK, PsbL, PsbM, PsbT, PsbX, PsbY, PsbZ, Psb30/Ycf12, at least 3 peripheral proteins of the oxygen-evolving complex and a large number of cofactors. It forms dimeric complexes. Binds multiple chlorophylls. PSII binds additional chlorophylls, carotenoids and specific lipids. is required as a cofactor.

It is found in the plastid. The protein localises to the chloroplast thylakoid membrane. Functionally, one of the components of the core complex of photosystem II (PSII). It binds chlorophyll and helps catalyze the primary light-induced photochemical processes of PSII. PSII is a light-driven water:plastoquinone oxidoreductase, using light energy to abstract electrons from H(2)O, generating O(2) and a proton gradient subsequently used for ATP formation. This chain is Photosystem II CP47 reaction center protein, found in Chlorella vulgaris (Green alga).